A 318-amino-acid chain; its full sequence is Ferrochelatase (318 aa).

Residues His-186 and Glu-264 each contribute to the Fe cation site.

The protein belongs to the ferrochelatase family.

The protein localises to the cytoplasm. It carries out the reaction heme b + 2 H(+) = protoporphyrin IX + Fe(2+). Its pathway is porphyrin-containing compound metabolism; protoheme biosynthesis; protoheme from protoporphyrin-IX: step 1/1. In terms of biological role, catalyzes the ferrous insertion into protoporphyrin IX. The protein is Ferrochelatase of Chlamydia caviae (strain ATCC VR-813 / DSM 19441 / 03DC25 / GPIC) (Chlamydophila caviae).